Consider the following 302-residue polypeptide: Protoheme IX farnesyltransferase (302 aa).

9 helical membrane passes run 27-47, 48-68, 97-117, 119-139, 148-168, 176-196, 219-239, 240-260, and 280-300; these read VLTL…QSIH, PVLG…AGAL, SALH…GLAL, VLAA…YTIW, IVIG…AATG, LLFA…ALFI, IQIM…WAMG, LTGA…LLLA, and LFGF…ADKV.

Belongs to the UbiA prenyltransferase family. Protoheme IX farnesyltransferase subfamily.

The protein resides in the cell inner membrane. The catalysed reaction is heme b + (2E,6E)-farnesyl diphosphate + H2O = Fe(II)-heme o + diphosphate. It functions in the pathway porphyrin-containing compound metabolism; heme O biosynthesis; heme O from protoheme: step 1/1. Functionally, converts heme B (protoheme IX) to heme O by substitution of the vinyl group on carbon 2 of heme B porphyrin ring with a hydroxyethyl farnesyl side group. The protein is Protoheme IX farnesyltransferase of Rhizorhabdus wittichii (strain DSM 6014 / CCUG 31198 / JCM 15750 / NBRC 105917 / EY 4224 / RW1) (Sphingomonas wittichii).